We begin with the raw amino-acid sequence, 263 residues long: MDNSWRLGPAIGLSAGQSQLLVSLLLLLTRVQPGTDVAAPEHISYVPQLSNDTLAGRLTLSTFTLEQPLGQFSSHNISDLDTIWLVVALSNATQSFTAPRTNQDIPAPANFSQRGYYLTLRANRVLYQTRGQLHVLRVGNDTHCQPTKIGCNHPLPGPGPYRVKFLVMNDEGPVAETKWSSDTRLQQAQALRAVPGPQSPGTVVIIAILSILLAVLLTVLLAVLIYTCFNSCRSTSLSGPEEAGSVRRYTTHLAFSTPAEGAS.

Positions 1–33 are cleaved as a signal peptide; that stretch reads MDNSWRLGPAIGLSAGQSQLLVSLLLLLTRVQP. The Extracellular portion of the chain corresponds to 34–204; sequence GTDVAAPEHI…PGPQSPGTVV (171 aa). Residues Asn51, Asn76, and Asn91 are each glycosylated (N-linked (GlcNAc...) asparagine). A helical transmembrane segment spans residues 205 to 225; sequence IIAILSILLAVLLTVLLAVLI. Residues 226–263 are Cytoplasmic-facing; sequence YTCFNSCRSTSLSGPEEAGSVRRYTTHLAFSTPAEGAS.

The protein belongs to the uroplakin-3 family.

The protein localises to the membrane. This Homo sapiens (Human) protein is Uroplakin-3b-like protein 1.